The chain runs to 333 residues: Adenosine deaminase (333 aa).

Positions 12 and 14 each coordinate Zn(2+). Histidine 14, aspartate 16, and glycine 170 together coordinate substrate. Histidine 197 is a Zn(2+) binding site. The Proton donor role is filled by glutamate 200. Aspartate 278 contributes to the Zn(2+) binding site. Aspartate 279 serves as a coordination point for substrate.

It belongs to the metallo-dependent hydrolases superfamily. Adenosine and AMP deaminases family. Adenosine deaminase subfamily. The cofactor is Zn(2+).

The enzyme catalyses adenosine + H2O + H(+) = inosine + NH4(+). It carries out the reaction 2'-deoxyadenosine + H2O + H(+) = 2'-deoxyinosine + NH4(+). Functionally, catalyzes the hydrolytic deamination of adenosine and 2-deoxyadenosine. The sequence is that of Adenosine deaminase from Salmonella agona (strain SL483).